A 33-amino-acid chain; its full sequence is Cytochrome b6-f complex subunit 7 (33 aa).

Residues 9–29 (AVICFTLTLIGLSLGFVLLKI) traverse the membrane as a helical segment.

This sequence belongs to the PetM family. The 4 large subunits of the cytochrome b6-f complex are cytochrome b6, subunit IV (17 kDa polypeptide, PetD), cytochrome f and the Rieske protein, while the 4 small subunits are PetG, PetL, PetM and PetN. The complex functions as a dimer.

Its subcellular location is the plastid. It is found in the cyanelle thylakoid membrane. Component of the cytochrome b6-f complex, which mediates electron transfer between photosystem II (PSII) and photosystem I (PSI), cyclic electron flow around PSI, and state transitions. The sequence is that of Cytochrome b6-f complex subunit 7 from Cyanophora paradoxa.